A 273-amino-acid polypeptide reads, in one-letter code: 2-dehydro-3-deoxyphosphooctonate aldolase (273 aa).

Belongs to the KdsA family.

It localises to the cytoplasm. It carries out the reaction D-arabinose 5-phosphate + phosphoenolpyruvate + H2O = 3-deoxy-alpha-D-manno-2-octulosonate-8-phosphate + phosphate. It functions in the pathway carbohydrate biosynthesis; 3-deoxy-D-manno-octulosonate biosynthesis; 3-deoxy-D-manno-octulosonate from D-ribulose 5-phosphate: step 2/3. It participates in bacterial outer membrane biogenesis; lipopolysaccharide biosynthesis. In Nitratidesulfovibrio vulgaris (strain ATCC 29579 / DSM 644 / CCUG 34227 / NCIMB 8303 / VKM B-1760 / Hildenborough) (Desulfovibrio vulgaris), this protein is 2-dehydro-3-deoxyphosphooctonate aldolase.